The chain runs to 223 residues: Glutathione S-transferase alpha I (223 aa).

An N-acetylmethionine modification is found at Met-1. Position 2 is an N-acetylalanine; in Glutathione S-transferase alpha I, N-terminally processed (Ala-2). The 81-residue stretch at 3–83 folds into the GST N-terminal domain; it reads RKPLLHYFNG…YVANKHNLYG (81 aa). Lys-4 carries the N6-succinyllysine modification. Glutathione-binding positions include Tyr-9, Arg-45, 54–55, and 67–68; these read QV and QT. Residues 85-208 enclose the GST C-terminal domain; that stretch reads DMKERALIDM…QPGSQRKPPM (124 aa).

This sequence belongs to the GST superfamily. Alpha family. Homodimer or heterodimer of GSTA1 and GSTA2. As to expression, liver and lung.

The protein resides in the cytoplasm. The enzyme catalyses RX + glutathione = an S-substituted glutathione + a halide anion + H(+). It catalyses the reaction prostaglandin A2 + glutathione = prostaglandin A2-S-(R)-glutathione. It carries out the reaction prostaglandin J2 + glutathione = prostaglandin J2-S-(R)-glutathione. The catalysed reaction is (13S)-hydroperoxy-(9Z,11E)-octadecadienoate + 2 glutathione = (13S)-hydroxy-(9Z,11E)-octadecadienoate + glutathione disulfide + H2O. The enzyme catalyses androst-5-ene-3,17-dione = androst-4-ene-3,17-dione. In terms of biological role, glutathione S-transferase that catalyzes the nucleophilic attack of the sulfur atom of glutathione on the electrophilic groups of a wide range of exogenous and endogenous compounds. Involved in the formation of glutathione conjugates of both prostaglandin A2 (PGA2) and prostaglandin J2 (PGJ2). It also catalyzes the isomerization of D5-androstene-3,17-dione (AD) into D4-androstene-3,17-dione and may therefore play an important role in hormone biosynthesis. Through its glutathione-dependent peroxidase activity toward the fatty acid hydroperoxide (13S)-hydroperoxy-(9Z,11E)-octadecadienoate/13-HPODE it is also involved in the metabolism of oxidized linoleic acid. This Oryctolagus cuniculus (Rabbit) protein is Glutathione S-transferase alpha I.